The primary structure comprises 432 residues: Proline--tRNA ligase (432 aa).

It belongs to the class-II aminoacyl-tRNA synthetase family. ProS type 2 subfamily. As to quaternary structure, homodimer.

The protein localises to the cytoplasm. The catalysed reaction is tRNA(Pro) + L-proline + ATP = L-prolyl-tRNA(Pro) + AMP + diphosphate. Its function is as follows. Catalyzes the attachment of proline to tRNA(Pro) in a two-step reaction: proline is first activated by ATP to form Pro-AMP and then transferred to the acceptor end of tRNA(Pro). This Rickettsia bellii (strain OSU 85-389) protein is Proline--tRNA ligase.